The chain runs to 280 residues: Borealin (280 aa).

Basic residues predominate over residues 140–153 (KVAAKKPSTARRTR). A disordered region spans residues 140–187 (KVAAKKPSTARRTRASVGNVANTSKRTSKRGRATPSASKQAETSLLGY).

The protein belongs to the borealin family. Component of the CPC at least composed of survivin/birc5, incenp, cdca8/borealin and/or cdca9/dasra-A, and aurkb/aurora-B. Interacts with incenp (via N-terminus).

It localises to the nucleus. The protein resides in the chromosome. Its subcellular location is the centromere. It is found in the cytoplasm. The protein localises to the cytoskeleton. It localises to the spindle. Its function is as follows. Component of the chromosomal passenger complex (CPC), a complex that acts as a key regulator of mitosis. The CPC complex has essential functions at the centromere in ensuring correct chromosome alignment and segregation and is required for chromatin-induced microtubule stabilization and spindle assembly. Contributes to CPC function by facilitating loading of the CPC onto chromosomes. The sequence is that of Borealin (cdca8) from Xenopus laevis (African clawed frog).